The primary structure comprises 146 residues: Ribonuclease H (146 aa).

An RNase H type-1 domain is found at 4-145 (ELNKVVVYTD…ADMLARSQIV (142 aa)). The Mg(2+) site is built by Asp-13, Glu-51, Asp-73, and Asp-137.

It belongs to the RNase H family. In terms of assembly, monomer. The cofactor is Mg(2+).

Its subcellular location is the cytoplasm. It carries out the reaction Endonucleolytic cleavage to 5'-phosphomonoester.. Endonuclease that specifically degrades the RNA of RNA-DNA hybrids. In Ehrlichia ruminantium (strain Gardel), this protein is Ribonuclease H.